Reading from the N-terminus, the 372-residue chain is N-methyl-L-tryptophan oxidase (372 aa).

4–34 (DLIIIGSGSVGAAAGYYATRAGLKVLMTDAH) is a binding site for FAD. At Cys307 the chain carries S-8alpha-FAD cysteine.

This sequence belongs to the MSOX/MTOX family. MTOX subfamily. In terms of assembly, monomer. FAD is required as a cofactor.

The catalysed reaction is N(alpha)-methyl-L-tryptophan + O2 + H2O = L-tryptophan + formaldehyde + H2O2. Catalyzes the oxidative demethylation of N-methyl-L-tryptophan. This is N-methyl-L-tryptophan oxidase from Salmonella heidelberg (strain SL476).